The chain runs to 438 residues: UPF0229 protein Smed_1028 (438 aa).

The segment at 55-107 is disordered; the sequence is PARGVNEPAFQPDSNSGERRHVLPGNREFAAGDRIPKRGGGGGAGNAGAGTGQ. The span at 92 to 105 shows a compositional bias: gly residues; it reads RGGGGGAGNAGAGT.

Belongs to the UPF0229 family.

The polypeptide is UPF0229 protein Smed_1028 (Sinorhizobium medicae (strain WSM419) (Ensifer medicae)).